Here is an 87-residue protein sequence, read N- to C-terminus: Small ribosomal subunit protein bS20 (87 aa).

Belongs to the bacterial ribosomal protein bS20 family.

In terms of biological role, binds directly to 16S ribosomal RNA. This chain is Small ribosomal subunit protein bS20, found in Beijerinckia indica subsp. indica (strain ATCC 9039 / DSM 1715 / NCIMB 8712).